A 120-amino-acid polypeptide reads, in one-letter code: Large ribosomal subunit protein uL18 (120 aa).

A compositionally biased stretch (basic and acidic residues) spans 1–10; sequence MSTPRKEQTQ. The tract at residues 1 to 25 is disordered; the sequence is MSTPRKEQTQKRHRRLRRHLEGTPE.

This sequence belongs to the universal ribosomal protein uL18 family. In terms of assembly, part of the 50S ribosomal subunit; part of the 5S rRNA/L5/L18/L25 subcomplex. Contacts the 5S and 23S rRNAs.

In terms of biological role, this is one of the proteins that bind and probably mediate the attachment of the 5S RNA into the large ribosomal subunit, where it forms part of the central protuberance. In Synechococcus sp. (strain RCC307), this protein is Large ribosomal subunit protein uL18.